A 297-amino-acid chain; its full sequence is Developmental pluripotency-associated protein 4 (297 aa).

The disordered stretch occupies residues 1–77; the sequence is MEPSGSKKGR…KVPVPPFPQH (77 aa). The span at 23–34 shows a compositional bias: low complexity; the sequence is SSQPSTSSAKTK. Residues 43-63 are compositionally biased toward basic and acidic residues; sequence SEKDDGCKPEEKSAQDPETPG. Position 211 is a phosphoserine (S211).

Interacts with DPPA2. Interacts with PCGF1.

It is found in the nucleus. In terms of biological role, may be involved in the maintenance of active epigenetic status of target genes. May inhibit differentiation of embryonic stem (ES) cells into a primitive ectoderm lineage. The sequence is that of Developmental pluripotency-associated protein 4 (Dppa4) from Rattus norvegicus (Rat).